The chain runs to 430 residues: Enolase (430 aa).

Gln163 lines the (2R)-2-phosphoglycerate pocket. The active-site Proton donor is the Glu205. Mg(2+)-binding residues include Asp242, Glu286, and Asp313. Positions 338, 367, 368, and 389 each coordinate (2R)-2-phosphoglycerate. Lys338 (proton acceptor) is an active-site residue.

It belongs to the enolase family. The cofactor is Mg(2+).

The protein resides in the cytoplasm. The protein localises to the secreted. It is found in the cell surface. The catalysed reaction is (2R)-2-phosphoglycerate = phosphoenolpyruvate + H2O. It participates in carbohydrate degradation; glycolysis; pyruvate from D-glyceraldehyde 3-phosphate: step 4/5. Its function is as follows. Catalyzes the reversible conversion of 2-phosphoglycerate (2-PG) into phosphoenolpyruvate (PEP). It is essential for the degradation of carbohydrates via glycolysis. The polypeptide is Enolase (Geotalea daltonii (strain DSM 22248 / JCM 15807 / FRC-32) (Geobacter daltonii)).